Consider the following 101-residue polypeptide: Large ribosomal subunit protein uL24 (101 aa).

Belongs to the universal ribosomal protein uL24 family. In terms of assembly, part of the 50S ribosomal subunit.

In terms of biological role, one of two assembly initiator proteins, it binds directly to the 5'-end of the 23S rRNA, where it nucleates assembly of the 50S subunit. Its function is as follows. One of the proteins that surrounds the polypeptide exit tunnel on the outside of the subunit. This Borreliella afzelii (strain PKo) (Borrelia afzelii) protein is Large ribosomal subunit protein uL24.